Here is a 990-residue protein sequence, read N- to C-terminus: Serine/threonine-protein kinase ATG1 (990 aa).

A Protein kinase domain is found at 15 to 334; sequence FVIENEIGKG…FDDFFASPVI (320 aa). ATP contacts are provided by residues 21-29 and Lys44; that span reads IGKGSFAVV. Residue Asp165 is the Proton acceptor of the active site. Residues 375–408 are compositionally biased toward polar residues; sequence VSSIEASTQQPGVQPPVSTATSPPALESRSTQEA. Disordered regions lie at residues 375–499, 529–566, 579–614, 750–784, and 970–990; these read VSSI…GGED, SRLGLASRRPSRLSRLSSGPLPSAPGASPPTAPPTILS, ASTGAFALPPGSRPSSFPRRASLSSSGSPSTRQGGQ, LSQELDSSTATSGISPSRNSVQGSARRVGSISSSS, and SPVGVDAEARPGVSRSRTESP. Low complexity-rich tracts occupy residues 529–554 and 587–613; these read SRLGLASRRPSRLSRLSSGPLPSAPG and PPGSRPSSFPRRASLSSSGSPSTRQGG. Over residues 750–771 the composition is skewed to polar residues; the sequence is LSQELDSSTATSGISPSRNSVQ. Over residues 772–784 the composition is skewed to low complexity; that stretch reads GSARRVGSISSSS.

The protein belongs to the protein kinase superfamily. Ser/Thr protein kinase family. APG1/unc-51/ULK1 subfamily. As to quaternary structure, homodimer. Forms a ternary complex with ATG13 and ATG17.

It localises to the cytoplasm. Its subcellular location is the preautophagosomal structure membrane. The enzyme catalyses L-seryl-[protein] + ATP = O-phospho-L-seryl-[protein] + ADP + H(+). The catalysed reaction is L-threonyl-[protein] + ATP = O-phospho-L-threonyl-[protein] + ADP + H(+). Its function is as follows. Serine/threonine protein kinase involved in the cytoplasm to vacuole transport (Cvt) and found to be essential in autophagy, where it is required for the formation of autophagosomes. Involved in the clearance of protein aggregates which cannot be efficiently cleared by the proteasome. Required for selective autophagic degradation of the nucleus (nucleophagy) as well as for mitophagy which contributes to regulate mitochondrial quantity and quality by eliminating the mitochondria to a basal level to fulfill cellular energy requirements and preventing excess ROS production. Also involved in endoplasmic reticulum-specific autophagic process, in selective removal of ER-associated degradation (ERAD) substrates. Plays a key role in ATG9 and ATG23 cycling through the pre-autophagosomal structure and is necessary to promote ATG18 binding to ATG9 through phosphorylation of ATG9. Catalyzes phosphorylation of ATG4, decreasing the interaction between ATG4 and ATG8 and impairing deconjugation of PE-conjugated forms of ATG8. Required for wild-type budding of haploid sporidia and for complete symptom development during pathogenic growth such as gall formation and teliospore production in ears of mature maize. This chain is Serine/threonine-protein kinase ATG1, found in Mycosarcoma maydis (Corn smut fungus).